The sequence spans 342 residues: Holliday junction branch migration complex subunit RuvB (342 aa).

The tract at residues 1–179 is large ATPase domain (RuvB-L); it reads MTNILSPEKS…FGIPMRLNFY (179 aa). Residues Ile-18, Arg-19, Gly-60, Lys-63, Thr-64, Thr-65, 126-128, Arg-169, Tyr-179, and Arg-216 contribute to the ATP site; that span reads EDF. Thr-64 contacts Mg(2+). Positions 180-250 are small ATPAse domain (RuvB-S); the sequence is NTEELKKVLN…VSDFGLNRLE (71 aa). The tract at residues 253–342 is head domain (RuvB-H); that stretch reads RIGLDSNDYR…HQFNIFNENE (90 aa). DNA is bound by residues Arg-289, Arg-308, and Arg-313.

This sequence belongs to the RuvB family. As to quaternary structure, homohexamer. Forms an RuvA(8)-RuvB(12)-Holliday junction (HJ) complex. HJ DNA is sandwiched between 2 RuvA tetramers; dsDNA enters through RuvA and exits via RuvB. An RuvB hexamer assembles on each DNA strand where it exits the tetramer. Each RuvB hexamer is contacted by two RuvA subunits (via domain III) on 2 adjacent RuvB subunits; this complex drives branch migration. In the full resolvosome a probable DNA-RuvA(4)-RuvB(12)-RuvC(2) complex forms which resolves the HJ.

It is found in the cytoplasm. The catalysed reaction is ATP + H2O = ADP + phosphate + H(+). Functionally, the RuvA-RuvB-RuvC complex processes Holliday junction (HJ) DNA during genetic recombination and DNA repair, while the RuvA-RuvB complex plays an important role in the rescue of blocked DNA replication forks via replication fork reversal (RFR). RuvA specifically binds to HJ cruciform DNA, conferring on it an open structure. The RuvB hexamer acts as an ATP-dependent pump, pulling dsDNA into and through the RuvAB complex. RuvB forms 2 homohexamers on either side of HJ DNA bound by 1 or 2 RuvA tetramers; 4 subunits per hexamer contact DNA at a time. Coordinated motions by a converter formed by DNA-disengaged RuvB subunits stimulates ATP hydrolysis and nucleotide exchange. Immobilization of the converter enables RuvB to convert the ATP-contained energy into a lever motion, pulling 2 nucleotides of DNA out of the RuvA tetramer per ATP hydrolyzed, thus driving DNA branch migration. The RuvB motors rotate together with the DNA substrate, which together with the progressing nucleotide cycle form the mechanistic basis for DNA recombination by continuous HJ branch migration. Branch migration allows RuvC to scan DNA until it finds its consensus sequence, where it cleaves and resolves cruciform DNA. This Rickettsia rickettsii (strain Sheila Smith) protein is Holliday junction branch migration complex subunit RuvB.